Here is a 132-residue protein sequence, read N- to C-terminus: MSRKRTSPNRNVQIADQIQRDLSELIMREVKDPRIGIVTIQSVELTPDYAHAKVYFTALTGDPEKTQEALNHASGHLHNLLFKRLHIHTVPTLHFHYDQTIEKAVEMSRLIKEANSTRAKDDDEAGAPAQDD.

The protein belongs to the RbfA family. As to quaternary structure, monomer. Binds 30S ribosomal subunits, but not 50S ribosomal subunits or 70S ribosomes.

It is found in the cytoplasm. Functionally, one of several proteins that assist in the late maturation steps of the functional core of the 30S ribosomal subunit. Associates with free 30S ribosomal subunits (but not with 30S subunits that are part of 70S ribosomes or polysomes). Required for efficient processing of 16S rRNA. May interact with the 5'-terminal helix region of 16S rRNA. The polypeptide is Ribosome-binding factor A (Burkholderia vietnamiensis (strain G4 / LMG 22486) (Burkholderia cepacia (strain R1808))).